Reading from the N-terminus, the 247-residue chain is ATP synthase subunit a, chloroplastic (247 aa).

5 helical membrane passes run 38–58, 95–115, 134–154, 199–219, and 220–240; these read QVLI…AIAV, VPFI…GALL, INTT…AGLT, LVVV…VMFL, and GLFT…AYIG.

This sequence belongs to the ATPase A chain family. F-type ATPases have 2 components, CF(1) - the catalytic core - and CF(0) - the membrane proton channel. CF(1) has five subunits: alpha(3), beta(3), gamma(1), delta(1), epsilon(1). CF(0) has four main subunits: a, b, b' and c.

The protein resides in the plastid. The protein localises to the chloroplast thylakoid membrane. Its function is as follows. Key component of the proton channel; it plays a direct role in the translocation of protons across the membrane. This is ATP synthase subunit a, chloroplastic from Calycanthus floridus var. glaucus (Eastern sweetshrub).